The chain runs to 239 residues: Small ribosomal subunit protein uS3 (239 aa).

Residues 40–108 (RGLLEKELYS…VALNVQEVQN (69 aa)) form the KH type-2 domain. A disordered region spans residues 212 to 239 (KPKARPELPKAEERPRRRRPAVRVKKEE). Residues 215–226 (ARPELPKAEERP) are compositionally biased toward basic and acidic residues. Residues 227–239 (RRRRPAVRVKKEE) show a composition bias toward basic residues.

The protein belongs to the universal ribosomal protein uS3 family. In terms of assembly, part of the 30S ribosomal subunit. Forms a tight complex with proteins S10 and S14.

Functionally, binds the lower part of the 30S subunit head. Binds mRNA in the 70S ribosome, positioning it for translation. This is Small ribosomal subunit protein uS3 (rpsC) from Thermus thermophilus (strain ATCC BAA-163 / DSM 7039 / HB27).